A 79-amino-acid chain; its full sequence is Acyl carrier protein (79 aa).

The Carrier domain maps to 2–77 (SSIEDRVKKI…QAVDYIKKHL (76 aa)). An O-(pantetheine 4'-phosphoryl)serine modification is found at Ser-37.

Belongs to the acyl carrier protein (ACP) family. 4'-phosphopantetheine is transferred from CoA to a specific serine of apo-ACP by AcpS. This modification is essential for activity because fatty acids are bound in thioester linkage to the sulfhydryl of the prosthetic group.

Its subcellular location is the cytoplasm. Its pathway is lipid metabolism; fatty acid biosynthesis. Functionally, carrier of the growing fatty acid chain in fatty acid biosynthesis. In Halorhodospira halophila (strain DSM 244 / SL1) (Ectothiorhodospira halophila (strain DSM 244 / SL1)), this protein is Acyl carrier protein.